Consider the following 498-residue polypeptide: MATCAADLAPLLGPVAANATDYLCNRFADTTSAVDATYLLFSAYLVFAMQLGFAMLCAGSVRAKNTMNIMLTNVLDAAAGALFYYLFGFAFAFGTPSNGFIGKQFFGLKHMPQTGFDYDFFLFQWAFAIAAAGITSGSIAERTQFVAYLIYSAFLTGFVYPVVSHWIWSADGWASASRTSGPLLFGSGVIDFAGSGVVHMVGGVAGLWGALIEGPRIGRFDHAGRSVALKGHSASLVVLGTFLLWFGWYGFNPGSFTTILKTYGPAGGINGQWSGVGRTAVTTTLAGSVAALTTLFGKRLQTGHWNVVDVCNGLLGGFAAITAGCSVVDPWAAIICGFVSAWVLIGLNALAARLKFDDPLEAAQLHGGCGAWGILFTALFARQKYVEEIYGAGRPYGLFMGGGGKLLAAHVIQILVIFGWVSCTMGPLFYGLKKLGLLRISAEDETSGMDLTRHGGFAYVYHDEDEHDKSGVGGFMLRSAQTRVEPAAAAASNSNNQV.

The next 11 helical transmembrane spans lie at 39–59 (LLFS…LCAG), 74–94 (VLDA…FAFG), 120–140 (FFLF…GSIA), 148–168 (YLIY…HWIW), 192–212 (FAGS…GALI), 236–256 (LVVL…PGSF), 274–296 (SGVG…TTLF), 307–327 (VVDV…GCSV), 331–351 (WAAI…NALA), 360–380 (LEAA…TALF), and 411–431 (VIQI…LFYG).

The protein belongs to the ammonia transporter channel (TC 1.A.11.2) family. Expressed in roots and shoots.

The protein resides in the membrane. Functionally, ammonium transporter probably involved in ammonium uptake from the soil. The chain is Ammonium transporter 1 member 1 (AMT1-1) from Oryza sativa subsp. japonica (Rice).